We begin with the raw amino-acid sequence, 102 residues long: DET1- and DDB1-associated protein 1 (102 aa).

At alanine 2 the chain carries N-acetylalanine. At serine 33 the chain carries Phosphoserine. 2 stretches are compositionally biased toward basic and acidic residues: residues lysine 66–glutamate 75 and alanine 91–threonine 102. A disordered region spans residues lysine 66–threonine 102. The residue at position 95 (serine 95) is a Phosphoserine.

The protein belongs to the DDA1 family. As to quaternary structure, component of numerous DCX (DDB1-CUL4-X-box) E3 ubiquitin-protein ligase complexes which consist of a core of DDB1, cullin-4 (CUL4A or CUL4B), DDA1 and RBX1. Component of the DCX(DCAF15) complex, also named CLR4(DCAF15) complex, composed of DCAF15, DDB1, cullin-4 (CUL4A or CUL4B), DDA1 and RBX1. Part of the DDD core complex containing DET1, DDA1 and DDB1; the DDD core complex recruits a specific UBE2E enzyme, such as UBE2E1, UBE2E2 UBE2E3, to form specific DDD-E2 complexes.

It participates in protein modification; protein ubiquitination. Functions as a component of numerous distinct DCX (DDB1-CUL4-X-box) E3 ubiquitin-protein ligase complexes which mediate the ubiquitination and subsequent proteasomal degradation of target proteins. In the DCX complexes, acts as a scaffolding subunit required to stabilize the complex. The sequence is that of DET1- and DDB1-associated protein 1 from Bos taurus (Bovine).